A 497-amino-acid polypeptide reads, in one-letter code: tRNA (adenine(58)-N(1))-methyltransferase non-catalytic subunit TRM6 (497 aa).

The tract at residues 81–103 (LEEPASETKEAGTDNRNIVDDGK) is disordered. The interval 95 to 105 (NRNIVDDGKSQ) is substrate. Phosphothreonine is present on T108. 2 substrate regions span residues 146–155 (KYIKKKKKKY) and 176–183 (REPGKINH). The interval 275 to 354 (MLSSEPKDST…EKQRRQEEQR (80 aa)) is disordered. Residues 289–307 (SNGELEEKEIAEQADEDNI) are compositionally biased toward acidic residues. Positions 328–354 (PENKEPKEKRSKRDYIQEKQRRQEEQR) are enriched in basic and acidic residues. 2 residues coordinate substrate: R349 and R377. Substrate stretches follow at residues 415 to 423 (RERGGVINL) and 434 to 441 (QVLPDRSH). Residues 474-497 (TGALDPHKAEEPAAKKQKCMESAS) are disordered. A compositionally biased stretch (basic and acidic residues) spans 478 to 487 (DPHKAEEPAA).

It belongs to the TRM6/GCD10 family. In terms of assembly, heterotetramer; composed of two copies of TRMT6 and two copies of TRMT61A.

It localises to the nucleus. In terms of biological role, substrate-binding subunit of tRNA (adenine-N(1)-)-methyltransferase, which catalyzes the formation of N(1)-methyladenine at position 58 (m1A58) in initiator methionyl-tRNA. Together with the TRMT61A catalytic subunit, part of a mRNA N(1)-methyltransferase complex that mediates methylation of adenosine residues at the N(1) position of a small subset of mRNAs: N(1) methylation takes place in tRNA T-loop-like structures of mRNAs and is only present at low stoichiometries. The protein is tRNA (adenine(58)-N(1))-methyltransferase non-catalytic subunit TRM6 (Trmt6) of Mus musculus (Mouse).